Consider the following 114-residue polypeptide: uncharacterized protein (114 aa).

The ABM domain maps to 13–99 (YYAVIFSSVK…VWYESYAVRV (87 aa)).

This is an uncharacterized protein from Bacillus subtilis (strain 168).